Consider the following 153-residue polypeptide: Deoxyuridine 5'-triphosphate nucleotidohydrolase (153 aa).

Residues 71–73 (RSG), N84, 88–90 (TID), and K98 each bind substrate.

This sequence belongs to the dUTPase family. It depends on Mg(2+) as a cofactor.

The catalysed reaction is dUTP + H2O = dUMP + diphosphate + H(+). Its pathway is pyrimidine metabolism; dUMP biosynthesis; dUMP from dCTP (dUTP route): step 2/2. Functionally, this enzyme is involved in nucleotide metabolism: it produces dUMP, the immediate precursor of thymidine nucleotides and it decreases the intracellular concentration of dUTP so that uracil cannot be incorporated into DNA. The protein is Deoxyuridine 5'-triphosphate nucleotidohydrolase of Wolbachia pipientis wMel.